A 460-amino-acid polypeptide reads, in one-letter code: Pentatricopeptide repeat-containing protein At5g43790 (460 aa).

9 PPR repeats span residues S70 to F107, N111 to F142, D149 to P179, D180 to P214, N215 to L249, N250 to R280, D281 to P315, D316 to P351, and K352 to K382. Positions L387–N460 are type E motif; degenerate.

It belongs to the PPR family. PCMP-E subfamily.

The chain is Pentatricopeptide repeat-containing protein At5g43790 (PCMP-E30) from Arabidopsis thaliana (Mouse-ear cress).